Reading from the N-terminus, the 359-residue chain is Small ribosomal subunit protein uS2 (359 aa).

Residues 232-295 are disordered; the sequence is EPQFKPSEFT…PVGTEPVATT (64 aa). 2 stretches are compositionally biased toward basic and acidic residues: residues 239-250 and 257-273; these read EFTRRDGDENRN and DNRRMSGRNERGRDTHY.

It belongs to the universal ribosomal protein uS2 family.

In Spiroplasma citri, this protein is Small ribosomal subunit protein uS2 (rpsB).